The primary structure comprises 364 residues: Protein-glutamate methylesterase/protein-glutamine glutaminase 3 (364 aa).

A Response regulatory domain is found at 7–124 (RVLIVDDSAS…THALLEASAR (118 aa)). Residue Asp-58 is modified to 4-aspartylphosphate. A CheB-type methylesterase domain is found at 167-358 (PTTERLVCIG…REIMLWQDAK (192 aa)). Catalysis depends on residues Ser-178, His-204, and Asp-300.

The protein belongs to the CheB family. Post-translationally, phosphorylated by CheA. Phosphorylation of the N-terminal regulatory domain activates the methylesterase activity.

It is found in the cytoplasm. The enzyme catalyses [protein]-L-glutamate 5-O-methyl ester + H2O = L-glutamyl-[protein] + methanol + H(+). The catalysed reaction is L-glutaminyl-[protein] + H2O = L-glutamyl-[protein] + NH4(+). In terms of biological role, involved in chemotaxis. Part of a chemotaxis signal transduction system that modulates chemotaxis in response to various stimuli. Catalyzes the demethylation of specific methylglutamate residues introduced into the chemoreceptors (methyl-accepting chemotaxis proteins or MCP) by CheR. Also mediates the irreversible deamidation of specific glutamine residues to glutamic acid. This chain is Protein-glutamate methylesterase/protein-glutamine glutaminase 3, found in Rhodopseudomonas palustris (strain BisB18).